Consider the following 158-residue polypeptide: Crossover junction endodeoxyribonuclease RuvC (158 aa).

Catalysis depends on residues Asp-7, Glu-67, and Asp-140. Positions 7, 67, and 140 each coordinate Mg(2+).

This sequence belongs to the RuvC family. Homodimer which binds Holliday junction (HJ) DNA. The HJ becomes 2-fold symmetrical on binding to RuvC with unstacked arms; it has a different conformation from HJ DNA in complex with RuvA. In the full resolvosome a probable DNA-RuvA(4)-RuvB(12)-RuvC(2) complex forms which resolves the HJ. It depends on Mg(2+) as a cofactor.

The protein resides in the cytoplasm. The catalysed reaction is Endonucleolytic cleavage at a junction such as a reciprocal single-stranded crossover between two homologous DNA duplexes (Holliday junction).. The RuvA-RuvB-RuvC complex processes Holliday junction (HJ) DNA during genetic recombination and DNA repair. Endonuclease that resolves HJ intermediates. Cleaves cruciform DNA by making single-stranded nicks across the HJ at symmetrical positions within the homologous arms, yielding a 5'-phosphate and a 3'-hydroxyl group; requires a central core of homology in the junction. The consensus cleavage sequence is 5'-(A/T)TT(C/G)-3'. Cleavage occurs on the 3'-side of the TT dinucleotide at the point of strand exchange. HJ branch migration catalyzed by RuvA-RuvB allows RuvC to scan DNA until it finds its consensus sequence, where it cleaves and resolves the cruciform DNA. This Dictyoglomus thermophilum (strain ATCC 35947 / DSM 3960 / H-6-12) protein is Crossover junction endodeoxyribonuclease RuvC.